The primary structure comprises 518 residues: uncharacterized protein (518 aa).

ABC transporter domains follow at residues 4-260 and 324-518; these read LSVK…QLEA and LIFE…TKVL. Residues 36 to 43 and 357 to 364 contribute to the ATP site; these read GANGEGKS and GANGIGKT.

Belongs to the ABC transporter superfamily.

This is an uncharacterized protein from Bacillus subtilis (strain 168).